The sequence spans 304 residues: Mediator of RNA polymerase II transcription subunit 7 (304 aa).

2 disordered regions span residues 42 to 85 (NNQT…PKQP) and 137 to 158 (NTDT…GDEN).

Belongs to the Mediator complex subunit 7 family. Component of the Mediator complex.

Its subcellular location is the nucleus. Its function is as follows. Component of the Mediator complex, a coactivator involved in the regulated transcription of nearly all RNA polymerase II-dependent genes. Mediator functions as a bridge to convey information from gene-specific regulatory proteins to the basal RNA polymerase II transcription machinery. Mediator is recruited to promoters by direct interactions with regulatory proteins and serves as a scaffold for the assembly of a functional preinitiation complex with RNA polymerase II and the general transcription factors. The polypeptide is Mediator of RNA polymerase II transcription subunit 7 (MED7) (Candida albicans (strain SC5314 / ATCC MYA-2876) (Yeast)).